A 261-amino-acid polypeptide reads, in one-letter code: tRNA U34 carboxymethyltransferase (261 aa).

Carboxy-S-adenosyl-L-methionine contacts are provided by residues K25, W39, K44, G63, 114-115 (VE), Y135, and R250.

Belongs to the class I-like SAM-binding methyltransferase superfamily. CmoB family. As to quaternary structure, homotetramer.

It catalyses the reaction carboxy-S-adenosyl-L-methionine + 5-hydroxyuridine(34) in tRNA = 5-carboxymethoxyuridine(34) in tRNA + S-adenosyl-L-homocysteine + H(+). Catalyzes carboxymethyl transfer from carboxy-S-adenosyl-L-methionine (Cx-SAM) to 5-hydroxyuridine (ho5U) to form 5-carboxymethoxyuridine (cmo5U) at position 34 in tRNAs. This is tRNA U34 carboxymethyltransferase from Helicobacter pylori (strain HPAG1).